The following is a 607-amino-acid chain: Chaperone protein DnaK (607 aa).

Threonine 174 bears the Phosphothreonine; by autocatalysis mark. The segment at 577-607 (GYTASGPQGGPNPGGGQSGPDGNVNTDYKVY) is disordered. Over residues 583–595 (PQGGPNPGGGQSG) the composition is skewed to gly residues.

The protein belongs to the heat shock protein 70 family.

In terms of biological role, acts as a chaperone. In Caldicellulosiruptor bescii (strain ATCC BAA-1888 / DSM 6725 / KCTC 15123 / Z-1320) (Anaerocellum thermophilum), this protein is Chaperone protein DnaK.